Here is a 101-residue protein sequence, read N- to C-terminus: Small ribosomal subunit protein uS14 (101 aa).

Belongs to the universal ribosomal protein uS14 family. In terms of assembly, part of the 30S ribosomal subunit. Contacts proteins S3 and S10.

Its function is as follows. Binds 16S rRNA, required for the assembly of 30S particles and may also be responsible for determining the conformation of the 16S rRNA at the A site. The protein is Small ribosomal subunit protein uS14 of Hahella chejuensis (strain KCTC 2396).